A 460-amino-acid chain; its full sequence is Probable carboxypeptidase TRV_02791 (460 aa).

A signal peptide spans 1 to 22 (MQKTYLWALVSLLASSLVDARS). N-linked (GlcNAc...) asparagine glycosylation is present at N98. Zn(2+) is bound at residue D175. Catalysis depends on E207, which acts as the Proton acceptor. E208 contributes to the Zn(2+) binding site. A glycan (N-linked (GlcNAc...) asparagine) is linked at N395.

It belongs to the peptidase M20A family. Requires Zn(2+) as cofactor.

It localises to the secreted. The sequence is that of Probable carboxypeptidase TRV_02791 from Trichophyton verrucosum (strain HKI 0517).